A 504-amino-acid polypeptide reads, in one-letter code: Taurochenodeoxycholic 6 alpha-hydroxylase (504 aa).

Helical transmembrane passes span 6-26 (LASVSGLLQVASLLGLLLLLL) and 110-130 (APVLYRLLIPWIGCGLLLLNG). Residue C451 participates in heme binding.

This sequence belongs to the cytochrome P450 family. Heme is required as a cofactor. As to expression, primarily expressed in liver. Low expression in kidney.

Its subcellular location is the endoplasmic reticulum membrane. It catalyses the reaction taurochenodeoxycholate + reduced [NADPH--hemoprotein reductase] + O2 = taurohyocholate + oxidized [NADPH--hemoprotein reductase] + H2O + H(+). The enzyme catalyses lithocholate + reduced [NADPH--hemoprotein reductase] + O2 = hyodeoxycholate + oxidized [NADPH--hemoprotein reductase] + H2O + H(+). Its function is as follows. Catalyzes the 6 alpha hydroxylation oxidation of taurodeoxycholate to produce the pig specific bile acid taurohyocholic acid. The sequence is that of Taurochenodeoxycholic 6 alpha-hydroxylase (CYP4A21) from Sus scrofa (Pig).